Here is a 234-residue protein sequence, read N- to C-terminus: MLTYETWEENVVSFSEEDETKGALSVLNWAYKEYKDEVVYACSFGVEGMVLLHIINQVNPSAKVVFLDTNVHFQETYELIQKVRERFPSLNIIEKQPELTLDEQAKLHGEKLWESNPNLCCKIRKILPLEKSLVVEKAWISGLRREQSETRKHTKFINQDHRFQSIKVCPLIHWTWKEVWRYVYKHSLPYNPLHDVGYPSIGCEKCTLPVGDGGDSRDGRWAGKVKTECGLHYQ.

Residues C120, C121, C203, and C206 each coordinate [4Fe-4S] cluster. Catalysis depends on C229, which acts as the Nucleophile; cysteine thiosulfonate intermediate.

Belongs to the PAPS reductase family. CysH subfamily. [4Fe-4S] cluster is required as a cofactor.

The protein localises to the cytoplasm. It catalyses the reaction [thioredoxin]-disulfide + sulfite + AMP + 2 H(+) = adenosine 5'-phosphosulfate + [thioredoxin]-dithiol. It participates in sulfur metabolism; hydrogen sulfide biosynthesis; sulfite from sulfate. Functionally, catalyzes the formation of sulfite from adenosine 5'-phosphosulfate (APS) using thioredoxin as an electron donor. The polypeptide is Adenosine 5'-phosphosulfate reductase (Bacillus cereus (strain B4264)).